The primary structure comprises 465 residues: GTPase Der (465 aa).

2 EngA-type G domains span residues 3-166 (FLVA…LNEF) and 184-358 (IHFS…ACAN). GTP-binding positions include 9–16 (GRANVGKS), 56–60 (DTGGI), 118–121 (NKVD), 190–197 (GRPNVGKS), 237–241 (DTAGV), and 302–305 (NKWD). One can recognise a KH-like domain in the interval 359 to 443 (KKITTADATR…PIVFEFKQSE (85 aa)).

It belongs to the TRAFAC class TrmE-Era-EngA-EngB-Septin-like GTPase superfamily. EngA (Der) GTPase family. As to quaternary structure, associates with the 50S ribosomal subunit.

Functionally, GTPase that plays an essential role in the late steps of ribosome biogenesis. The chain is GTPase Der from Francisella philomiragia subsp. philomiragia (strain ATCC 25017 / CCUG 19701 / FSC 153 / O#319-036).